Consider the following 159-residue polypeptide: 2-C-methyl-D-erythritol 2,4-cyclodiphosphate synthase (159 aa).

Residues aspartate 8 and histidine 10 each contribute to the a divalent metal cation site. 4-CDP-2-C-methyl-D-erythritol 2-phosphate contacts are provided by residues 8–10 (DVH) and 34–35 (HS). A divalent metal cation is bound at residue histidine 42. 4-CDP-2-C-methyl-D-erythritol 2-phosphate is bound by residues 56-58 (DIG), 61-65 (FPDTD), 100-106 (AQAPKML), 132-135 (TTTE), phenylalanine 139, and arginine 142.

It belongs to the IspF family. Homotrimer. A divalent metal cation is required as a cofactor.

It carries out the reaction 4-CDP-2-C-methyl-D-erythritol 2-phosphate = 2-C-methyl-D-erythritol 2,4-cyclic diphosphate + CMP. It participates in isoprenoid biosynthesis; isopentenyl diphosphate biosynthesis via DXP pathway; isopentenyl diphosphate from 1-deoxy-D-xylulose 5-phosphate: step 4/6. Its function is as follows. Involved in the biosynthesis of isopentenyl diphosphate (IPP) and dimethylallyl diphosphate (DMAPP), two major building blocks of isoprenoid compounds. Catalyzes the conversion of 4-diphosphocytidyl-2-C-methyl-D-erythritol 2-phosphate (CDP-ME2P) to 2-C-methyl-D-erythritol 2,4-cyclodiphosphate (ME-CPP) with a corresponding release of cytidine 5-monophosphate (CMP). In Escherichia coli O139:H28 (strain E24377A / ETEC), this protein is 2-C-methyl-D-erythritol 2,4-cyclodiphosphate synthase.